The primary structure comprises 46 residues: Protein PsbN (46 aa).

The chain crosses the membrane as a helical span at residues 7–27; the sequence is GLSIAITFAVILLALTGFSIY.

Belongs to the PsbN family.

It localises to the cellular thylakoid membrane. Its function is as follows. May play a role in photosystem I and II biogenesis. The protein is Protein PsbN of Synechococcus elongatus (strain ATCC 33912 / PCC 7942 / FACHB-805) (Anacystis nidulans R2).